Here is a 287-residue protein sequence, read N- to C-terminus: uncharacterized protein (287 aa).

Residues 1-31 (MLGSMALKLRKWIWASIPSLALILSSCSALV) form the signal peptide.

The protein belongs to the MG439/MG440 family.

This is an uncharacterized protein from Mycoplasma pneumoniae (strain ATCC 29342 / M129 / Subtype 1) (Mycoplasmoides pneumoniae).